Reading from the N-terminus, the 224-residue chain is Urease accessory protein UreF (224 aa).

It belongs to the UreF family. UreD, UreF and UreG form a complex that acts as a GTP-hydrolysis-dependent molecular chaperone, activating the urease apoprotein by helping to assemble the nickel containing metallocenter of UreC. The UreE protein probably delivers the nickel.

It localises to the cytoplasm. Required for maturation of urease via the functional incorporation of the urease nickel metallocenter. The chain is Urease accessory protein UreF from Pseudomonas putida (strain ATCC 700007 / DSM 6899 / JCM 31910 / BCRC 17059 / LMG 24140 / F1).